A 313-amino-acid chain; its full sequence is Ornithine carbamoyltransferase (313 aa).

Carbamoyl phosphate-binding positions include 57–60 (STRT), Q84, R108, and 135–138 (HPCQ). L-ornithine-binding positions include N166, D230, and 234 to 235 (SM). Residues 270–271 (CL) and R298 each bind carbamoyl phosphate.

The protein belongs to the aspartate/ornithine carbamoyltransferase superfamily. OTCase family. In terms of assembly, homohexamer.

Its subcellular location is the cytoplasm. The enzyme catalyses carbamoyl phosphate + L-ornithine = L-citrulline + phosphate + H(+). It functions in the pathway amino-acid biosynthesis; L-arginine biosynthesis; L-arginine from L-ornithine and carbamoyl phosphate: step 1/3. Reversibly catalyzes the transfer of the carbamoyl group from carbamoyl phosphate (CP) to the N(epsilon) atom of ornithine (ORN) to produce L-citrulline. This chain is Ornithine carbamoyltransferase, found in Gloeobacter violaceus (strain ATCC 29082 / PCC 7421).